A 159-amino-acid chain; its full sequence is Probable chemoreceptor glutamine deamidase CheD 1 (159 aa).

This sequence belongs to the CheD family.

The enzyme catalyses L-glutaminyl-[protein] + H2O = L-glutamyl-[protein] + NH4(+). Functionally, probably deamidates glutamine residues to glutamate on methyl-accepting chemotaxis receptors (MCPs), playing an important role in chemotaxis. The protein is Probable chemoreceptor glutamine deamidase CheD 1 of Methanosarcina acetivorans (strain ATCC 35395 / DSM 2834 / JCM 12185 / C2A).